Consider the following 497-residue polypeptide: uncharacterized protein (497 aa).

ABC transporter domains lie at 9 to 247 (VSVR…MGQA) and 256 to 496 (ARPA…TGMA). Residue 41 to 48 (GGNGAGKS) participates in ATP binding.

This sequence belongs to the ABC transporter superfamily. Ribose importer (TC 3.A.1.2.1) family.

It localises to the cell membrane. Its function is as follows. Probably part of the binding-protein-dependent transport system y4mIJK. This system probably transports a sugar. Probably responsible for energy coupling to the transport system. This is an uncharacterized protein from Sinorhizobium fredii (strain NBRC 101917 / NGR234).